The sequence spans 158 residues: NKG2-F type II integral membrane protein (158 aa).

Polar residues predominate over residues 1–12 (MNKQRGTYSEVS). The disordered stretch occupies residues 1–25 (MNKQRGTYSEVSLAQDPKRQQRKLK). The Cytoplasmic portion of the chain corresponds to 1 to 74 (MNKQRGTYSE…LPPPEKLTAE (74 aa)). A helical; Signal-anchor for type II membrane protein membrane pass occupies residues 75–95 (VLGIICIVLMATVLKTIVLIP). Residues 96–158 (CIGVLEQNNF…VLRRTLICFL (63 aa)) lie on the Extracellular side of the membrane.

As to quaternary structure, can form disulfide-bonded heterodimer with CD94. Natural killer cells.

The protein resides in the membrane. May play a role as a receptor for the recognition of MHC class I HLA-E molecules by NK cells. The chain is NKG2-F type II integral membrane protein (KLRC4) from Homo sapiens (Human).